We begin with the raw amino-acid sequence, 239 residues long: 4-hydroxy-tetrahydrodipicolinate reductase (239 aa).

NAD(+)-binding positions include 12–17, 94–96, and 118–121; these read GASGRM, GTT, and ASNF. H150 serves as the catalytic Proton donor/acceptor. (S)-2,3,4,5-tetrahydrodipicolinate is bound at residue H151. Residue K154 is the Proton donor of the active site. A (S)-2,3,4,5-tetrahydrodipicolinate-binding site is contributed by 160–161; the sequence is GT.

It belongs to the DapB family.

Its subcellular location is the cytoplasm. It carries out the reaction (S)-2,3,4,5-tetrahydrodipicolinate + NAD(+) + H2O = (2S,4S)-4-hydroxy-2,3,4,5-tetrahydrodipicolinate + NADH + H(+). The enzyme catalyses (S)-2,3,4,5-tetrahydrodipicolinate + NADP(+) + H2O = (2S,4S)-4-hydroxy-2,3,4,5-tetrahydrodipicolinate + NADPH + H(+). Its pathway is amino-acid biosynthesis; L-lysine biosynthesis via DAP pathway; (S)-tetrahydrodipicolinate from L-aspartate: step 4/4. In terms of biological role, catalyzes the conversion of 4-hydroxy-tetrahydrodipicolinate (HTPA) to tetrahydrodipicolinate. This chain is 4-hydroxy-tetrahydrodipicolinate reductase, found in Stenotrophomonas maltophilia (strain R551-3).